The following is a 488-amino-acid chain: PTS system mannitol-specific EIICB component (488 aa).

At 1-26 (MRKKLAKVKVHIQSLDSLLSSMTMPI) the chain is on the cytoplasmic side. Residues 15–362 (LDSLLSSMTM…LSLTRKKQLK (348 aa)) enclose the PTS EIIC type-2 domain. The helical transmembrane segment at 27 to 48 (IGIFIAWGLLASFFIPSGWTPD) threads the bilayer. Over 49–52 (KNLA) the chain is Extracellular. A helical membrane pass occupies residues 53 to 73 (LMVGIGIQYVIPTIIXFFGGK). The Cytoplasmic portion of the chain corresponds to 74 to 147 (KIYEIRGGVI…SGFEMLVNNF (74 aa)). The helical transmembrane segment at 148–169 (YLGFLGFALIFPSFYLSIYLIG) threads the bilayer. At 170-178 (YIQLGLKLL) the chain is on the extracellular side. The chain crosses the membrane as a helical span at residues 179–199 (VEIMQQYKLYPIAAIVIEPAK). The Cytoplasmic portion of the chain corresponds to 200-289 (VLFLNNAINH…VLLKPVLILA (90 aa)). The chain crosses the membrane as a helical span at residues 290 to 309 (TIAVGVVGNGILQIFNAGTI). Topologically, residues 310-331 (APVSPGSVIAGFLQINKTPLDV) are extracellular. A helical membrane pass occupies residues 332-353 (AGYALALVLSAVTSLLISLLLL). The Cytoplasmic portion of the chain corresponds to 354–488 (SLTRKKQLKT…IIEKIKNEKN (135 aa)). One can recognise a PTS EIIB type-2 domain in the interval 397 to 488 (SQVTFVCDAG…IIEKIKNEKN (92 aa)). The active-site Phosphocysteine intermediate; for EIIB activity is cysteine 403. A Phosphocysteine; by EIIA modification is found at cysteine 403.

As to quaternary structure, homodimer.

The protein localises to the cell membrane. The enzyme catalyses D-mannitol(out) + N(pros)-phospho-L-histidyl-[protein] = D-mannitol 1-phosphate(in) + L-histidyl-[protein]. Functionally, the phosphoenolpyruvate-dependent sugar phosphotransferase system (sugar PTS), a major carbohydrate active transport system, catalyzes the phosphorylation of incoming sugar substrates concomitantly with their translocation across the cell membrane. The enzyme II CmtAB PTS system is involved in D-mannitol transport. This chain is PTS system mannitol-specific EIICB component (mtlA), found in Mycoplasma pneumoniae (strain ATCC 29342 / M129 / Subtype 1) (Mycoplasmoides pneumoniae).